Consider the following 304-residue polypeptide: 1D-myo-inositol 2-acetamido-2-deoxy-alpha-D-glucopyranoside deacetylase 2 (304 aa).

Zn(2+)-binding residues include H17, D20, and H152.

It belongs to the MshB deacetylase family. Zn(2+) serves as cofactor.

It carries out the reaction 1D-myo-inositol 2-acetamido-2-deoxy-alpha-D-glucopyranoside + H2O = 1D-myo-inositol 2-amino-2-deoxy-alpha-D-glucopyranoside + acetate. Functionally, catalyzes the deacetylation of 1D-myo-inositol 2-acetamido-2-deoxy-alpha-D-glucopyranoside (GlcNAc-Ins) in the mycothiol biosynthesis pathway. This is 1D-myo-inositol 2-acetamido-2-deoxy-alpha-D-glucopyranoside deacetylase 2 from Catenulispora acidiphila (strain DSM 44928 / JCM 14897 / NBRC 102108 / NRRL B-24433 / ID139908).